A 499-amino-acid polypeptide reads, in one-letter code: Maturase K (499 aa).

It belongs to the intron maturase 2 family. MatK subfamily.

The protein localises to the plastid. It localises to the chloroplast. Its function is as follows. Usually encoded in the trnK tRNA gene intron. Probably assists in splicing its own and other chloroplast group II introns. This is Maturase K from Gymnocladus chinensis (Soap tree).